A 213-amino-acid chain; its full sequence is Uridine kinase (213 aa).

Residue 15–22 coordinates ATP; that stretch reads GASASGKS.

This sequence belongs to the uridine kinase family.

The protein resides in the cytoplasm. It carries out the reaction uridine + ATP = UMP + ADP + H(+). The enzyme catalyses cytidine + ATP = CMP + ADP + H(+). Its pathway is pyrimidine metabolism; CTP biosynthesis via salvage pathway; CTP from cytidine: step 1/3. The protein operates within pyrimidine metabolism; UMP biosynthesis via salvage pathway; UMP from uridine: step 1/1. In Pectobacterium carotovorum subsp. carotovorum (strain PC1), this protein is Uridine kinase.